The following is a 65-amino-acid chain: Toxin VmKTx1 (65 aa).

An N-terminal signal peptide occupies residues 1–21; sequence MKTSCLLTILLLSFLVAVAVA. Residues 22–28 constitute a propeptide that is removed on maturation; it reads EGERSAR. 4 disulfides stabilise this stretch: cysteine 34-cysteine 54, cysteine 40-cysteine 59, cysteine 44-cysteine 61, and cysteine 49-cysteine 64. Cysteine amide is present on cysteine 64.

The protein belongs to the short scorpion toxin superfamily. Potassium channel inhibitor family. Alpha-KTx 23 subfamily. In terms of tissue distribution, expressed by the venom gland.

The protein resides in the secreted. Voltage-gated potassium channel inhibitor. Selectively and reversibly binds (Kd=0.77 nM) and blocks hKv1.3/KCNA3 potassium channels of human T-lymphocytes. Also shows a very weak effect on hKv1.2/KCNA2 (Kd=7.1 uM). Also reduces the fraction of CD40L expressing T cells that are stimulated by alphaCD3/alphaCD28. The protein is Toxin VmKTx1 of Vaejovis mexicanus smithi (Mexican scorpion).